Reading from the N-terminus, the 438-residue chain is Aspartate--tRNA(Asp) ligase (438 aa).

Residue Glu170 coordinates L-aspartate. The tract at residues Gln192–Lys195 is aspartate. Arg214 contacts L-aspartate. Residues Arg214 to Glu216, Arg222 to Leu224, and Glu361 each bind ATP. The Mg(2+) site is built by Glu361 and Ser364. L-aspartate contacts are provided by Ser364 and Arg368. ATP is bound at residue Gly409 to Arg412.

It belongs to the class-II aminoacyl-tRNA synthetase family. Type 2 subfamily. As to quaternary structure, homodimer. Mg(2+) is required as a cofactor.

Its subcellular location is the cytoplasm. It carries out the reaction tRNA(Asp) + L-aspartate + ATP = L-aspartyl-tRNA(Asp) + AMP + diphosphate. Its function is as follows. Catalyzes the attachment of L-aspartate to tRNA(Asp) in a two-step reaction: L-aspartate is first activated by ATP to form Asp-AMP and then transferred to the acceptor end of tRNA(Asp). The chain is Aspartate--tRNA(Asp) ligase from Pyrococcus furiosus (strain ATCC 43587 / DSM 3638 / JCM 8422 / Vc1).